We begin with the raw amino-acid sequence, 742 residues long: Mechanosensitive ion channel protein 9 (742 aa).

The interval 1-117 (MAERRVSNGE…REENGGRSLR (117 aa)) is disordered. The span at 17–26 (SDKEDSKDPR) shows a compositional bias: basic and acidic residues. Ser28 and Ser36 each carry phosphoserine. Over residues 105–117 (DSTREENGGRSLR) the composition is skewed to basic and acidic residues. Residues Ser142 and Ser145 each carry the phosphoserine modification. 6 consecutive transmembrane segments (helical) span residues 180–200 (AFLE…SLTI), 221–241 (MVTL…VFII), 261–281 (NVQV…LFDG), 292–312 (FLDF…LFLV), 524–544 (LITG…LDIA), and 559–579 (LAFM…FVFV).

Belongs to the MscS (TC 1.A.23) family. Detected in the epidermis, cortex, and endodermis of the root tip.

It localises to the cell membrane. Its function is as follows. Mechanosensitive channel that opens in response to stretch forces in the membrane lipid bilayer. The polypeptide is Mechanosensitive ion channel protein 9 (MSL9) (Arabidopsis thaliana (Mouse-ear cress)).